The chain runs to 278 residues: Octanoyltransferase LipM (278 aa).

The region spanning 33–248 (KKMPPTIRFY…GFEKGLDVEL (216 aa)) is the BPL/LPL catalytic domain. The active-site Acyl-thioester intermediate is cysteine 150.

Belongs to the octanoyltransferase LipM family. As to quaternary structure, monomer.

It carries out the reaction octanoyl-[ACP] + L-lysyl-[protein] = N(6)-octanoyl-L-lysyl-[protein] + holo-[ACP] + H(+). The protein operates within protein modification; protein lipoylation via endogenous pathway; protein N(6)-(lipoyl)lysine from octanoyl-[acyl-carrier-protein]. Functionally, catalyzes the transfer of endogenously produced octanoic acid from octanoyl-acyl-carrier-protein onto the lipoyl domain of GcvH, an intermediate carrier during protein lipoylation. This Bacillus anthracis protein is Octanoyltransferase LipM.